A 254-amino-acid chain; its full sequence is NAD-dependent protein deacetylase 1 (254 aa).

Residues 3-252 (VDFTTDELDE…PKLLDRLRGM (250 aa)) enclose the Deacetylase sirtuin-type domain. NAD(+)-binding residues include Ala-29, Thr-33, Phe-40, Arg-41, Gln-105, Val-107, Asp-108, and His-123. Phe-40 provides a ligand contact to nicotinamide. Nicotinamide-binding residues include Val-107 and Asp-108. His-123 (proton acceptor) is an active-site residue. Residues Cys-131, Cys-134, Cys-154, and Cys-157 each coordinate Zn(2+). Residues Thr-195, Ser-196, and Asn-220 each coordinate NAD(+).

Belongs to the sirtuin family. Class U subfamily. The cofactor is Zn(2+).

It localises to the cytoplasm. It carries out the reaction N(6)-acetyl-L-lysyl-[protein] + NAD(+) + H2O = 2''-O-acetyl-ADP-D-ribose + nicotinamide + L-lysyl-[protein]. NAD-dependent protein deacetylase which modulates the activities of several enzymes which are inactive in their acetylated form. Deacetylates the N-terminal lysine residue of Alba, the major archaeal chromatin protein and that, in turn, increases Alba's DNA binding affinity, thereby repressing transcription. This is NAD-dependent protein deacetylase 1 from Pyrobaculum aerophilum (strain ATCC 51768 / DSM 7523 / JCM 9630 / CIP 104966 / NBRC 100827 / IM2).